The sequence spans 150 residues: Large ribosomal subunit protein eL19 (150 aa).

Residues 55–89 are disordered; sequence IKGQSRYRAKIRHEQKKKGRHRGPGSRKGKKTARM.

Belongs to the eukaryotic ribosomal protein eL19 family. In terms of assembly, part of the 50S ribosomal subunit.

Binds to the 23S rRNA. The chain is Large ribosomal subunit protein eL19 from Pyrococcus furiosus (strain ATCC 43587 / DSM 3638 / JCM 8422 / Vc1).